Reading from the N-terminus, the 266-residue chain is Undecaprenyl-diphosphatase (266 aa).

Helical transmembrane passes span 1 to 21 (MDTFQVIILALIQGLTEFLPI), 39 to 59 (QGLSFDVAVNTGSLFAVVIYF), 87 to 107 (WWIILATLPAVFFGFIAKDFI), 111 to 131 (LRSAGVIAVTTIVFGLLLWWA), 149 to 169 (ALLIGFAQALALIPGTSRSGA), 183 to 203 (AAARFSFLMSVPVSLGAAILV), 218 to 238 (ALTLGTVISFVAAYLCIHYFL), and 246 to 266 (MTPFVIYRLILGAVLCGFIFL).

It belongs to the UppP family.

The protein resides in the cell inner membrane. The enzyme catalyses di-trans,octa-cis-undecaprenyl diphosphate + H2O = di-trans,octa-cis-undecaprenyl phosphate + phosphate + H(+). In terms of biological role, catalyzes the dephosphorylation of undecaprenyl diphosphate (UPP). Confers resistance to bacitracin. In Shewanella sp. (strain MR-7), this protein is Undecaprenyl-diphosphatase.